The primary structure comprises 233 residues: Ribonuclease 3 (233 aa).

The RNase III domain maps to 4-126; it reads LNKLMERLGH…IVGAIYIDAG (123 aa). Glutamate 39 contributes to the Mg(2+) binding site. Residue aspartate 43 is part of the active site. Mg(2+)-binding residues include aspartate 112 and glutamate 115. Glutamate 115 is a catalytic residue. A DRBM domain is found at 153–222; sequence DAKSLLQEWL…AKRFLELLDD (70 aa).

This sequence belongs to the ribonuclease III family. In terms of assembly, homodimer. Requires Mg(2+) as cofactor.

The protein resides in the cytoplasm. It catalyses the reaction Endonucleolytic cleavage to 5'-phosphomonoester.. In terms of biological role, digests double-stranded RNA. Involved in the processing of primary rRNA transcript to yield the immediate precursors to the large and small rRNAs (23S and 16S). Processes some mRNAs, and tRNAs when they are encoded in the rRNA operon. Processes pre-crRNA and tracrRNA of type II CRISPR loci if present in the organism. The chain is Ribonuclease 3 from Coxiella burnetii (strain Dugway 5J108-111).